The primary structure comprises 765 residues: 1,4-alpha-glucan branching enzyme GlgB (765 aa).

The active-site Nucleophile is D431. Residue E484 is the Proton donor of the active site.

The protein belongs to the glycosyl hydrolase 13 family. GlgB subfamily. As to quaternary structure, monomer.

It catalyses the reaction Transfers a segment of a (1-&gt;4)-alpha-D-glucan chain to a primary hydroxy group in a similar glucan chain.. The protein operates within glycan biosynthesis; glycogen biosynthesis. In terms of biological role, catalyzes the formation of the alpha-1,6-glucosidic linkages in glycogen by scission of a 1,4-alpha-linked oligosaccharide from growing alpha-1,4-glucan chains and the subsequent attachment of the oligosaccharide to the alpha-1,6 position. This is 1,4-alpha-glucan branching enzyme GlgB from Synechococcus sp. (strain CC9605).